A 482-amino-acid polypeptide reads, in one-letter code: ATP synthase subunit beta (482 aa).

167-174 contributes to the ATP binding site; the sequence is GGAGVGKT.

Belongs to the ATPase alpha/beta chains family. As to quaternary structure, F-type ATPases have 2 components, CF(1) - the catalytic core - and CF(0) - the membrane proton channel. CF(1) has five subunits: alpha(3), beta(3), gamma(1), delta(1), epsilon(1). CF(0) has three main subunits: a(1), b(2) and c(9-12). The alpha and beta chains form an alternating ring which encloses part of the gamma chain. CF(1) is attached to CF(0) by a central stalk formed by the gamma and epsilon chains, while a peripheral stalk is formed by the delta and b chains.

It localises to the cell membrane. It catalyses the reaction ATP + H2O + 4 H(+)(in) = ADP + phosphate + 5 H(+)(out). In terms of biological role, produces ATP from ADP in the presence of a proton gradient across the membrane. The catalytic sites are hosted primarily by the beta subunits. The chain is ATP synthase subunit beta from Corynebacterium aurimucosum (strain ATCC 700975 / DSM 44827 / CIP 107346 / CN-1) (Corynebacterium nigricans).